The primary structure comprises 818 residues: Structure-specific endonuclease subunit SLX4 (818 aa).

Disordered stretches follow at residues 1-39 (MSFL…PSAS), 53-151 (RDPY…SSSN), 279-324 (FSEG…HQDS), 413-437 (NAQF…KTSK), and 587-712 (MLPA…MASE). A compositionally biased stretch (low complexity) spans 28-39 (VIDSSPSVPSAS). The span at 90 to 103 (PSERTKDAHGKDRF) shows a compositional bias: basic and acidic residues. The segment covering 306-316 (TTSTTITSLST) has biased composition (low complexity). Polar residues predominate over residues 426–437 (TRSPCSNPKTSK). Basic and acidic residues predominate over residues 604 to 618 (QMSKRDTIKSRDIRA). 3 stretches are compositionally biased toward polar residues: residues 621–640 (SRSN…QNTG), 652–672 (SSKS…TQSV), and 696–712 (SLAS…MASE).

This sequence belongs to the SLX4 family. In terms of assembly, forms a heterodimer with SLX1. In terms of processing, phosphorylated in response to DNA damage.

Its subcellular location is the nucleus. Regulatory subunit of the SLX1-SLX4 structure-specific endonuclease that resolves DNA secondary structures generated during DNA repair and recombination. Has endonuclease activity towards branched DNA substrates, introducing single-strand cuts in duplex DNA close to junctions with ss-DNA. The sequence is that of Structure-specific endonuclease subunit SLX4 from Uncinocarpus reesii (strain UAMH 1704).